The chain runs to 197 residues: Prefoldin subunit 3 (197 aa).

Positions 1 to 26 (MASLALRGSSENPAPTKDTTTNPRGI) are disordered. The segment covering 9–23 (SSENPAPTKDTTTNP) has biased composition (polar residues).

The protein belongs to the prefoldin subunit alpha family. In terms of assembly, heterohexamer of two PFD-alpha type and four PFD-beta type subunits.

Prefoldin subunit; part of the gene cluster that mediates the biosynthesis of elsinochromes, pigments consisting of at least four interconvertible tautomers (A, B, C and D) that have a core phenolic quinone to which various side chains are attached and which play an important role in fungal pathogenesis. The non-reducing polyketide synthase PKS1 was proposed to iteratively catalyze decarboxylation between acetyl-CoA and malonyl-CoA subunits for polyketide chain elongation. The released polyketide undergoes cyclization to form an aromatic ring, and proceeds via serial modification steps to produce the heptaketide back- bone of elsinochrome. As elsinochrome has a symmetrical structure, two identical heptaketides are fused to form a core 1,2-dihydrobenzo-perylene ring structure, which can then be successively modified to produce the various derivatives of elsinochrome. Some of these reactions may be cooperatively carried out, at least in part, by the products of RDT1, OXR1 and PKS1. PRF1, embedded within the elsinochrome cluster possibly functions to stabilize some of the biosynthetic enzymes required for elsinochrome production. As prefoldin is a hexamer containing 2 a and 4 b subunits, additional prefoldin subunits, whose coding genes may not immediately link to the elsinochrome biosynthetic gene cluster, are required to fulfill the chaperone function. In addition, no methyltransferase-coding gene exists within the biosynthetic gene cluster, even though elsinochrome has four methyl groups at positions C3, C7, C8 and C12. Apparently, the identified gene cluster does not contain the entire entourage of genes responsible for elsinochrome biosynthesis. Once elsinochrome is synthesized, it must be exported outside the fungal cells, which is probably accomplished by the ECT1 transporter, to avoid toxicity. This chain is Prefoldin subunit 3, found in Elsinoe fawcettii (Citrus scab fungus).